We begin with the raw amino-acid sequence, 322 residues long: ATP-dependent 6-phosphofructokinase (322 aa).

Glycine 11 is an ATP binding site. An ADP-binding site is contributed by 21–25 (RAVVR). ATP is bound by residues 72–73 (RC) and 102–105 (GDGS). Aspartate 103 contacts Mg(2+). 127–129 (TID) contributes to the substrate binding site. The active-site Proton acceptor is aspartate 129. Position 156 (arginine 156) interacts with ADP. Residues arginine 164 and 171-173 (MGR) contribute to the substrate site. Residues 187-189 (GAE), arginine 213, and 215-217 (KKH) each bind ADP. Substrate-binding positions include glutamate 224, arginine 245, and 251–254 (HIQR).

The protein belongs to the phosphofructokinase type A (PFKA) family. ATP-dependent PFK group I subfamily. Prokaryotic clade 'B1' sub-subfamily. As to quaternary structure, homotetramer. Mg(2+) serves as cofactor.

It localises to the cytoplasm. It catalyses the reaction beta-D-fructose 6-phosphate + ATP = beta-D-fructose 1,6-bisphosphate + ADP + H(+). It participates in carbohydrate degradation; glycolysis; D-glyceraldehyde 3-phosphate and glycerone phosphate from D-glucose: step 3/4. With respect to regulation, allosterically activated by ADP and other diphosphonucleosides, and allosterically inhibited by phosphoenolpyruvate. Its function is as follows. Catalyzes the phosphorylation of D-fructose 6-phosphate to fructose 1,6-bisphosphate by ATP, the first committing step of glycolysis. The sequence is that of ATP-dependent 6-phosphofructokinase from Staphylococcus carnosus (strain TM300).